A 726-amino-acid polypeptide reads, in one-letter code: Bromodomain-containing protein 3 (726 aa).

The tract at residues Met-1–Lys-35 is disordered. Position 2 is an N-acetylserine (Ser-2). Residues Thr-15 to Val-26 are compositionally biased toward pro residues. The Bromo 1 domain occupies Arg-34–Met-140. The interval Lys-78–Pro-80 is acetylated histone H3 binding. Disordered regions lie at residues Pro-149–Gln-169 and Val-237–Lys-305. The span at Thr-248–Ser-261 shows a compositional bias: low complexity. Phosphoserine occurs at positions 263 and 281. In terms of domain architecture, Bromo 2 spans Gly-306–Met-415. Residue Lys-414 forms a Glycyl lysine isopeptide (Lys-Gly) (interchain with G-Cter in SUMO2) linkage. 3 disordered regions span residues Glu-421 to Arg-462, Leu-477 to Asp-575, and Leu-637 to Glu-726. Positions Ser-453 to Ala-524 form a coiled coil. Positions Lys-487–Asp-503 are enriched in basic residues. A compositionally biased stretch (basic and acidic residues) spans Lys-504–Ala-521. Over residues Val-523 to Ala-540 the composition is skewed to low complexity. Positions Asp-562 to Pro-644 constitute an NET domain. Ser-563 bears the Phosphoserine mark. Residues Phe-645–Lys-684 adopt a coiled-coil conformation. A compositionally biased stretch (basic and acidic residues) spans Lys-655 to Gln-673. The span at Gly-692–Glu-726 shows a compositional bias: low complexity.

Belongs to the BET family. In terms of assembly, interacts (via bromo domain 1) with GATA1 acetylated at 'Lys-312' and 'Lys-315'. Interacts (via bromo domain 1) with GATA2 acetylated on lysine residues. Interacts (via NET domain) with CHD4 (via KIKL motif). Interacts (via NET domain) with SMARCA4 (via KIKL motif). Interacts (via NET domain) with NSD3 (via KIKL motif). (Microbial infection) Interacts with the Integrase protein of Moloney murine leukemia virus (MLV). As to expression, ubiquitous.

Its subcellular location is the nucleus. It is found in the chromosome. Its activity is regulated as follows. Inhibited by JQ1, a thieno-triazolo-1,4-diazepine derivative, which specifically inhibits members of the BET family (BRD2, BRD3 and BRD4). The first bromo domain is inhibited by GSK778 (iBET-BD1), which specifically inhibits the first bromo domain of members of the BET family (BRD2, BRD3 and BRD4). The second bromo domain is inhibited by ABBV-744, which specifically inhibits the second bromo domain of members of the BET family (BRD2, BRD3 and BRD4). The second bromo domain is inhibited by GSK046 (iBET-BD2), which specifically inhibits the second bromo domain of members of the BET family (BRD2, BRD3 and BRD4). Functionally, chromatin reader that recognizes and binds acetylated histones, thereby controlling gene expression and remodeling chromatin structures. Recruits transcription factors and coactivators to target gene sites, and activates RNA polymerase II machinery for transcriptional elongation. In vitro, binds acetylated lysine residues on the N-terminus of histone H2A, H2B, H3 and H4. Involved in endoderm differentiation via its association with long non-coding RNA (lncRNA) DIGIT: BRD3 undergoes liquid-liquid phase separation upon binding to lncRNA DIGIT, promoting binding to histone H3 acetylated at 'Lys-18' (H3K18ac) to induce endoderm gene expression. Also binds non-histones acetylated proteins, such as GATA1 and GATA2: regulates transcription by promoting the binding of the transcription factor GATA1 to its targets. The chain is Bromodomain-containing protein 3 from Homo sapiens (Human).